A 413-amino-acid chain; its full sequence is Histidinol-phosphate aminotransferase, chloroplastic (413 aa).

The N-terminal 35 residues, 1–35, are a transit peptide targeting the chloroplast; it reads MGVIELCNTSSICIGRANPSCCSIERNQRRRIICM. The residue at position 273 (Lys-273) is an N6-(pyridoxal phosphate)lysine.

Belongs to the class-II pyridoxal-phosphate-dependent aminotransferase family. Histidinol-phosphate aminotransferase subfamily. Homodimer. The cofactor is pyridoxal 5'-phosphate. Expressed in flowers, leaves, stems and roots.

Its subcellular location is the plastid. The protein localises to the chloroplast. It carries out the reaction L-histidinol phosphate + 2-oxoglutarate = 3-(imidazol-4-yl)-2-oxopropyl phosphate + L-glutamate. It participates in amino-acid biosynthesis; L-histidine biosynthesis; L-histidine from 5-phospho-alpha-D-ribose 1-diphosphate: step 7/9. The chain is Histidinol-phosphate aminotransferase, chloroplastic (HPA) from Nicotiana plumbaginifolia (Leadwort-leaved tobacco).